A 241-amino-acid chain; its full sequence is Trypsin-10 (241 aa).

Residues 1–13 (MKSLIFVLLLGAV) form the signal peptide. A propeptide spans 14–19 (FAEEDK) (activation peptide). The Peptidase S1 domain occupies 20–239 (IVGGYECTRH…LSGWVRDTMA (220 aa)). Disulfide bonds link cysteine 26–cysteine 155, cysteine 44–cysteine 60, cysteine 128–cysteine 228, cysteine 135–cysteine 201, cysteine 166–cysteine 180, and cysteine 191–cysteine 215. Catalysis depends on charge relay system residues histidine 59 and aspartate 103. Catalysis depends on serine 195, which acts as the Charge relay system.

The protein belongs to the peptidase S1 family.

The protein localises to the secreted. The protein resides in the extracellular space. The catalysed reaction is Preferential cleavage: Arg-|-Xaa, Lys-|-Xaa.. The sequence is that of Trypsin-10 from Gadus morhua (Atlantic cod).